The following is a 440-amino-acid chain: NADH-quinone oxidoreductase subunit H (440 aa).

The next 9 membrane-spanning stretches (helical) occupy residues 11 to 31, 83 to 103, 123 to 143, 164 to 184, 207 to 227, 261 to 281, 299 to 319, 331 to 351, and 366 to 386; these read VWLI…WTIF, IVFN…WSVI, VPVA…GVVL, MISY…FSGS, IAGH…ITMF, FLAE…LFLG, WWGL…FVWV, FMDL…LLVA, and VFLV…FMGG.

This sequence belongs to the complex I subunit 1 family. In terms of assembly, NDH-1 is composed of 14 different subunits. Subunits NuoA, H, J, K, L, M, N constitute the membrane sector of the complex.

The protein localises to the cell membrane. The catalysed reaction is a quinone + NADH + 5 H(+)(in) = a quinol + NAD(+) + 4 H(+)(out). Its function is as follows. NDH-1 shuttles electrons from NADH, via FMN and iron-sulfur (Fe-S) centers, to quinones in the respiratory chain. The immediate electron acceptor for the enzyme in this species is believed to be ubiquinone. Couples the redox reaction to proton translocation (for every two electrons transferred, four hydrogen ions are translocated across the cytoplasmic membrane), and thus conserves the redox energy in a proton gradient. This subunit may bind ubiquinone. This Cutibacterium acnes (strain DSM 16379 / KPA171202) (Propionibacterium acnes) protein is NADH-quinone oxidoreductase subunit H.